Here is a 389-residue protein sequence, read N- to C-terminus: Ribonucleoside-diphosphate reductase subunit M2 (389 aa).

Serine 20 carries the phosphoserine modification. Threonine 33 is subject to Phosphothreonine. Residues 49-51 (RRI) carry the Cy motif. Fe cation-binding residues include aspartate 138, glutamate 169, and histidine 172. Tyrosine 176 is an active-site residue. Residues glutamate 232, glutamate 266, and histidine 269 each contribute to the Fe cation site.

It belongs to the ribonucleoside diphosphate reductase small chain family. As to quaternary structure, heterodimer of a large and a small subunit. Interacts (via Cy motif and when phosphorylated at Thr-33) with CCNF; the interaction occurs exclusively in G2 and early M. Requires Fe cation as cofactor. In terms of processing, phosphorylation on Ser-20 relieves the inhibitory effect on Wnt signaling. Phosphorylated on Thr-33 by CDK1 and CDK2; predominantly in G2 and M phase. Ubiquitinated by the SCF(CCNF) E3 ubiquitin-protein ligase complex; leading to its degradation by the proteasome.

It is found in the cytoplasm. The protein resides in the nucleus. It catalyses the reaction a 2'-deoxyribonucleoside 5'-diphosphate + [thioredoxin]-disulfide + H2O = a ribonucleoside 5'-diphosphate + [thioredoxin]-dithiol. Functionally, provides the precursors necessary for DNA synthesis. Catalyzes the biosynthesis of deoxyribonucleotides from the corresponding ribonucleotides. Inhibits Wnt signaling. The protein is Ribonucleoside-diphosphate reductase subunit M2 (RRM2) of Homo sapiens (Human).